The chain runs to 127 residues: uncharacterized protein (127 aa).

The tract at residues 1–34 (MKNPESSGVSSSPQIQRVSPSSSSTSPSPPSIGT) is disordered. Residues 9-34 (VSSSPQIQRVSPSSSSTSPSPPSIGT) are compositionally biased toward low complexity. 2 consecutive transmembrane segments (helical) span residues 47–67 (IAAVVVAVDVVDIMSVDPLAM) and 84–104 (TIAVDSITLLYTPICLCYLLV).

Its subcellular location is the membrane. This is an uncharacterized protein from Saccharomyces cerevisiae (strain ATCC 204508 / S288c) (Baker's yeast).